Consider the following 787-residue polypeptide: Protein FAM149A (787 aa).

Disordered regions lie at residues 22-105 (SPAV…SSGA), 144-175 (GSNS…APGP), 189-226 (EEWT…PTNF), 238-284 (ASES…SWRD), 432-455 (DGDE…GLPP), 573-602 (LQQR…ASSR), and 665-697 (AVQT…SYRG). Polar residues predominate over residues 37–46 (SVDSGASTSL). Composition is skewed to low complexity over residues 51 to 65 (TLTL…TAAS) and 96 to 105 (SGSLPSSSGA). Residues 144 to 155 (GSNSVTASSPRN) show a composition bias toward polar residues. Acidic residues predominate over residues 189–200 (EEWTSDSDSQDD). A compositionally biased stretch (basic and acidic residues) spans 201–220 (PEGRGLSEGLRKQSSEKSKD). Over residues 239 to 250 (SESPSSFSSSGS) the composition is skewed to low complexity. Residues 251 to 261 (RTPTEAHNSWP) show a composition bias toward polar residues. Over residues 262–274 (GSSTQSSTTGLST) the composition is skewed to low complexity.

Belongs to the FAM149 family.

The chain is Protein FAM149A (Fam149a) from Mus musculus (Mouse).